A 160-amino-acid chain; its full sequence is Ureidoglycolate lyase (160 aa).

Belongs to the ureidoglycolate lyase family. As to quaternary structure, homodimer. Ni(2+) serves as cofactor.

The catalysed reaction is (S)-ureidoglycolate = urea + glyoxylate. It participates in nitrogen metabolism; (S)-allantoin degradation. Catalyzes the catabolism of the allantoin degradation intermediate (S)-ureidoglycolate, generating urea and glyoxylate. Involved in the anaerobic utilization of allantoin as sole nitrogen source. Reinforces the induction of genes involved in the degradation of allantoin and glyoxylate by producing glyoxylate. The sequence is that of Ureidoglycolate lyase from Shigella flexneri serotype 5b (strain 8401).